A 103-amino-acid polypeptide reads, in one-letter code: Large ribosomal subunit protein bL21 (103 aa).

Belongs to the bacterial ribosomal protein bL21 family. In terms of assembly, part of the 50S ribosomal subunit. Contacts protein L20.

In terms of biological role, this protein binds to 23S rRNA in the presence of protein L20. The chain is Large ribosomal subunit protein bL21 from Aromatoleum aromaticum (strain DSM 19018 / LMG 30748 / EbN1) (Azoarcus sp. (strain EbN1)).